The sequence spans 316 residues: Protoheme IX farnesyltransferase (316 aa).

9 helical membrane passes run 28 to 48, 57 to 77, 106 to 126, 129 to 149, 156 to 176, 179 to 199, 230 to 250, 254 to 274, and 296 to 316; these read WLAL…AAGM, IPIG…AGAI, AALV…WLAT, LAAD…TMWL, NIVI…AATM, MAVL…PHFW, ILIY…VHEV, YTVV…RVLM, and YSLV…VLIG.

This sequence belongs to the UbiA prenyltransferase family. Protoheme IX farnesyltransferase subfamily.

The protein resides in the cell inner membrane. It carries out the reaction heme b + (2E,6E)-farnesyl diphosphate + H2O = Fe(II)-heme o + diphosphate. It participates in porphyrin-containing compound metabolism; heme O biosynthesis; heme O from protoheme: step 1/1. Functionally, converts heme B (protoheme IX) to heme O by substitution of the vinyl group on carbon 2 of heme B porphyrin ring with a hydroxyethyl farnesyl side group. The polypeptide is Protoheme IX farnesyltransferase (Gluconobacter oxydans (strain 621H) (Gluconobacter suboxydans)).